The chain runs to 92 residues: Probable K(+)/H(+) antiporter subunit F (92 aa).

Helical transmembrane passes span 4–24 (AVVW…AFAL), 36–56 (RILG…TFGI), and 62–82 (VYFE…IALA).

The protein belongs to the CPA3 antiporters (TC 2.A.63) subunit F family. In terms of assembly, may form a hetero-oligomeric complex that consists of six subunits: PhaAB, PhaC, PhaD, PhaE, PhaF and PhaG.

It localises to the cell membrane. Part of a K(+) efflux system which is required for the adaptation of R.meliloti to alkaline pH as well as for the infection process during symbiotic nodule development. In Rhizobium meliloti (strain 1021) (Ensifer meliloti), this protein is Probable K(+)/H(+) antiporter subunit F (phaF).